The chain runs to 230 residues: Cytidylate kinase (230 aa).

Residue 12-20 (GPSGAGKGT) coordinates ATP.

This sequence belongs to the cytidylate kinase family. Type 1 subfamily.

The protein resides in the cytoplasm. It carries out the reaction CMP + ATP = CDP + ADP. It catalyses the reaction dCMP + ATP = dCDP + ADP. This is Cytidylate kinase from Shewanella putrefaciens (strain CN-32 / ATCC BAA-453).